A 147-amino-acid polypeptide reads, in one-letter code: Spermidine export protein MdtJ (147 aa).

A run of 4 helical transmembrane segments spans residues 1-21 (MIYWIFLGLAIIAEIIGTLSM), 31-51 (TGHIVMYFMITGSYVMLSLAV), 54-74 (VALGVAYALWEGIGILIITIF), and 81-101 (ETLSPLKIAGLVTLIGGILLV). The segment at 105–147 (TRKPKQPNCHRGNRPPSVQELKTQTTGHHKGVAVESGEHHAAA) is disordered.

It belongs to the drug/metabolite transporter (DMT) superfamily. Small multidrug resistance (SMR) (TC 2.A.7.1) family. MdtJ subfamily. Forms a complex with MdtI.

It localises to the cell inner membrane. Its function is as follows. Catalyzes the excretion of spermidine. This is Spermidine export protein MdtJ from Yersinia pestis bv. Antiqua (strain Antiqua).